The following is a 266-amino-acid chain: Tryptophan synthase alpha chain (266 aa).

Residues Glu-51 and Asp-62 each act as proton acceptor in the active site.

The protein belongs to the TrpA family. As to quaternary structure, tetramer of two alpha and two beta chains.

The catalysed reaction is (1S,2R)-1-C-(indol-3-yl)glycerol 3-phosphate + L-serine = D-glyceraldehyde 3-phosphate + L-tryptophan + H2O. The protein operates within amino-acid biosynthesis; L-tryptophan biosynthesis; L-tryptophan from chorismate: step 5/5. In terms of biological role, the alpha subunit is responsible for the aldol cleavage of indoleglycerol phosphate to indole and glyceraldehyde 3-phosphate. The sequence is that of Tryptophan synthase alpha chain from Prochlorococcus marinus (strain NATL1A).